Here is a 265-residue protein sequence, read N- to C-terminus: Imidazole glycerol phosphate synthase subunit HisF (265 aa).

Residues aspartate 17 and aspartate 136 contribute to the active site.

Belongs to the HisA/HisF family. Heterodimer of HisH and HisF.

Its subcellular location is the cytoplasm. The catalysed reaction is 5-[(5-phospho-1-deoxy-D-ribulos-1-ylimino)methylamino]-1-(5-phospho-beta-D-ribosyl)imidazole-4-carboxamide + L-glutamine = D-erythro-1-(imidazol-4-yl)glycerol 3-phosphate + 5-amino-1-(5-phospho-beta-D-ribosyl)imidazole-4-carboxamide + L-glutamate + H(+). The protein operates within amino-acid biosynthesis; L-histidine biosynthesis; L-histidine from 5-phospho-alpha-D-ribose 1-diphosphate: step 5/9. IGPS catalyzes the conversion of PRFAR and glutamine to IGP, AICAR and glutamate. The HisF subunit catalyzes the cyclization activity that produces IGP and AICAR from PRFAR using the ammonia provided by the HisH subunit. In Mycobacterium avium (strain 104), this protein is Imidazole glycerol phosphate synthase subunit HisF.